An 838-amino-acid polypeptide reads, in one-letter code: Envelope glycoprotein H (838 aa).

A signal peptide spans 1-18 (MGNGLWFVGVIILGVAWG). At 19-803 (QVHDWTEQTD…DTQPVAAIAP (785 aa)) the chain is on the virion surface side. 2 N-linked (GlcNAc...) asparagine; by host glycosylation sites follow: N73 and N120. The interval 174–204 (FPRGDNVATASHPSGPRDTPPPRPPVGARRH) is disordered. Residue N216 is glycosylated (N-linked (GlcNAc...) asparagine; by host). Residues 259-323 (DAALVRARYG…PGGPRYRVFV (65 aa)) form an interaction with gL region. N332, N437, N670, and N784 each carry an N-linked (GlcNAc...) asparagine; by host glycan. The helical transmembrane segment at 804–824 (GFLAASALGVVMITAALAGIL) threads the bilayer. Over 825–838 (KVLRTSVPFFWRRE) the chain is Intravirion.

Belongs to the herpesviridae glycoprotein H family. In terms of assembly, interacts with glycoprotein L (gL); this interaction is necessary for the correct processing and cell surface expression of gH. The heterodimer gH/gL seems to interact with gB trimers during fusion. Associates with the gB-gH/gL-gD complex. Interacts with VP16. In terms of processing, N-glycosylated, O-glycosylated, and sialylated.

It is found in the virion membrane. It localises to the host cell membrane. The protein localises to the host endosome membrane. Functionally, the heterodimer glycoprotein H-glycoprotein L is required for the fusion of viral and plasma membranes leading to virus entry into the host cell. Following initial binding to host receptor, membrane fusion is mediated by the fusion machinery composed of gB and the heterodimer gH/gL. May also be involved in the fusion between the virion envelope and the outer nuclear membrane during virion morphogenesis. The protein is Envelope glycoprotein H of Human herpesvirus 1 (strain 17) (HHV-1).